Consider the following 744-residue polypeptide: Tripartite motif-containing protein 2 (744 aa).

A Phosphoserine modification is found at Ser10. The RING-type zinc-finger motif lies at 23-64; that stretch reads CSICLERYKNPKVLPCLHTFCERCLQNYIPAHSLTLSCPVCR. A B box-type zinc finger spans residues 113–154; sequence GKPLSCPNHDGNVMEFYCQSCETAMCRECTEGEHAEHPTVPL. Zn(2+)-binding residues include Cys118, His121, Cys141, and His146. The stretch at 320–421 is one Filamin repeat; that stretch reads TTNAVASETV…IRGSPFKLKV (102 aa). The residue at position 371 (Thr371) is a Phosphothreonine. A phosphoserine mark is found at Ser375, Ser424, and Ser428. Residues 432-462 are disordered; sequence EGVKRRVKSPGSGHVKQKAVKRPASMYSTGK. 6 NHL repeats span residues 473 to 516, 520 to 563, 564 to 605, 609 to 652, 656 to 699, and 700 to 743; these read IFRV…FSND, KSRF…FSND, GKFK…FQPN, VTRF…FNQE, MLKF…FDGS, and GSFL…YRYL.

Belongs to the TRIM/RBCC family. Forms homooligomers. Interacts with TRIM3; this interaction reduces TRIM2 activity. Interacts with myosin V; myosin V may not be a substrate for ubiquitination. Interacts with NEFL. Interacts with phosphorylated BCL2L11. Interacts with SIRPA. RING-type zinc finger-dependent and UBE2D1-dependent autoubiquitination. In terms of tissue distribution, highly expressed in the cerebellum, hippocampus, retina and spinal cord. In the cerebellum, strongest expression in Purkinje cells and in the deep cerebellar nuclei. In retina, high expression in the ganglionic cell layer, inner nuclear layer and inthe outer plexiform layer. Particularly high expression in the hippocampus, in pyramidal cells of CA1-CA3 hippocampal areas and ingranule cells of the dentate gyrus.

The protein resides in the cytoplasm. The enzyme catalyses S-ubiquitinyl-[E2 ubiquitin-conjugating enzyme]-L-cysteine + [acceptor protein]-L-lysine = [E2 ubiquitin-conjugating enzyme]-L-cysteine + N(6)-ubiquitinyl-[acceptor protein]-L-lysine.. It participates in protein modification; protein ubiquitination. Its function is as follows. UBE2D1-dependent E3 ubiquitin-protein ligase that mediates the ubiquitination of NEFL and of phosphorylated BCL2L11. Plays a neuroprotective function. May play a role in neuronal rapid ischemic tolerance. Plays a role in antiviral immunity and limits new world arenavirus infection independently of its ubiquitin ligase activity by decreasing virus internalization. This is Tripartite motif-containing protein 2 (Trim2) from Mus musculus (Mouse).